Here is a 1153-residue protein sequence, read N- to C-terminus: Error-prone DNA polymerase (1153 aa).

The disordered stretch occupies residues 1107–1153; sequence DELIAPSASTEREAPLNDDRRDHPDLPAQQIRHPRNVRILPPSRDFH. The span at 1116–1131 shows a compositional bias: basic and acidic residues; it reads TEREAPLNDDRRDHPD.

It belongs to the DNA polymerase type-C family. DnaE2 subfamily.

Its subcellular location is the cytoplasm. The enzyme catalyses DNA(n) + a 2'-deoxyribonucleoside 5'-triphosphate = DNA(n+1) + diphosphate. DNA polymerase involved in damage-induced mutagenesis and translesion synthesis (TLS). It is not the major replicative DNA polymerase. This chain is Error-prone DNA polymerase, found in Rhodopseudomonas palustris (strain BisA53).